The primary structure comprises 360 residues: Phospho-N-acetylmuramoyl-pentapeptide-transferase (360 aa).

10 helical membrane-spanning segments follow: residues 27–47 (GAFL…INVL), 69–89 (VGTP…STLM), 93–113 (WDNP…LIGF), 134–154 (LLLG…NHPA), 168–188 (VLLN…VGAA), 199–219 (GLAI…AYAV), 239–259 (ILIF…YNAP), 262–282 (AVFM…AIAI), 288–308 (LVLA…IIQV), and 337–357 (TIVI…LATL).

Belongs to the glycosyltransferase 4 family. MraY subfamily. It depends on Mg(2+) as a cofactor.

The protein localises to the cell inner membrane. It carries out the reaction UDP-N-acetyl-alpha-D-muramoyl-L-alanyl-gamma-D-glutamyl-meso-2,6-diaminopimeloyl-D-alanyl-D-alanine + di-trans,octa-cis-undecaprenyl phosphate = di-trans,octa-cis-undecaprenyl diphospho-N-acetyl-alpha-D-muramoyl-L-alanyl-D-glutamyl-meso-2,6-diaminopimeloyl-D-alanyl-D-alanine + UMP. It functions in the pathway cell wall biogenesis; peptidoglycan biosynthesis. Catalyzes the initial step of the lipid cycle reactions in the biosynthesis of the cell wall peptidoglycan: transfers peptidoglycan precursor phospho-MurNAc-pentapeptide from UDP-MurNAc-pentapeptide onto the lipid carrier undecaprenyl phosphate, yielding undecaprenyl-pyrophosphoryl-MurNAc-pentapeptide, known as lipid I. In Ruegeria sp. (strain TM1040) (Silicibacter sp.), this protein is Phospho-N-acetylmuramoyl-pentapeptide-transferase.